The primary structure comprises 37 residues: Esculentin-2B (37 aa).

Cysteines 31 and 37 form a disulfide.

Expressed by the skin glands.

The protein localises to the secreted. In terms of biological role, antibacterial activity against Gram-positive bacterium S.aureus and Gram-negative bacterium E.coli. Has activity against C.albicans. This is Esculentin-2B from Lithobates berlandieri (Rio Grande leopard frog).